Here is a 557-residue protein sequence, read N- to C-terminus: Probable protein kinase UbiB (557 aa).

The 389-residue stretch at 121–509 (AFDTTPLASA…RKLQTRVVTA (389 aa)) folds into the Protein kinase domain. Residues 127 to 135 (LASASIAQV) and K154 each bind ATP. D289 functions as the Proton acceptor in the catalytic mechanism. Transmembrane regions (helical) follow at residues 506–526 (VVTAITGSGLLVVAAVLYGLH) and 535–555 (VPVWSWISGGAGSAALLIAWL).

Belongs to the ABC1 family. UbiB subfamily.

The protein localises to the cell inner membrane. The protein operates within cofactor biosynthesis; ubiquinone biosynthesis [regulation]. In terms of biological role, is probably a protein kinase regulator of UbiI activity which is involved in aerobic coenzyme Q (ubiquinone) biosynthesis. This is Probable protein kinase UbiB from Xanthomonas campestris pv. campestris (strain B100).